The following is a 338-amino-acid chain: Pseudouridylate synthase TRUB1 (338 aa).

Alanine 2 carries the post-translational modification N-acetylalanine. Aspartate 109 serves as the catalytic Nucleophile.

This sequence belongs to the pseudouridine synthase TruB family.

Its subcellular location is the nucleus. The protein resides in the cytoplasm. It localises to the cytosol. The enzyme catalyses a uridine in mRNA = a pseudouridine in mRNA. It carries out the reaction a uridine in tRNA = a pseudouridine in tRNA. The catalysed reaction is uridine(55) in tRNA = pseudouridine(55) in tRNA. Its function is as follows. Pseudouridine synthase that catalyzes pseudouridylation of mRNAs and tRNAs. Mediates pseudouridylation of mRNAs with the consensus sequence 5'-GUUCNANNC-3', harboring a stem-loop structure. Constitutes the major pseudouridine synthase acting on mRNAs. Also catalyzes pseudouridylation of some tRNAs, including synthesis of pseudouridine(55) from uracil-55, in the psi GC loop of a subset of tRNAs. Promotes the processing of pri-let-7 microRNAs (pri-miRNAs) independently of its RNA pseudouridylate synthase activity. Acts by binding to the stem-loop structure on pri-let-7, preventing LIN28-binding (LIN28A and/or LIN28B), thereby enhancing the interaction between pri-let-7 and the microprocessor DGCR8, which mediates miRNA maturation. In Mus musculus (Mouse), this protein is Pseudouridylate synthase TRUB1.